Here is a 537-residue protein sequence, read N- to C-terminus: Ceramide kinase (537 aa).

Residues Met-1–Trp-115 form an essential for enzyme activity region. The required for binding to sulfatide and phosphoinositides stretch occupies residues Met-1–Lys-125. In terms of domain architecture, DAGKc spans Ser-128–Ser-278. ATP-binding positions include Asn-138–Phe-140 and Thr-170–Asn-174. Gly-195–Gly-198 contacts substrate. Residue Asp-197 is the Proton donor/acceptor of the active site. ATP is bound by residues Glu-202, Gly-239–Thr-241, Arg-304, and Arg-310. 2 positions are modified to phosphoserine: Ser-340 and Ser-408. Asp-502–Glu-504 contributes to the ATP binding site.

Ca(2+) serves as cofactor. Requires Mg(2+) as cofactor. In terms of tissue distribution, high level expression in heart, brain, skeletal muscle, kidney and liver; moderate in peripheral blood leukocytes and thymus; very low in spleen, small intestine, placenta and lung.

The protein resides in the cytoplasm. It localises to the cell membrane. The enzyme catalyses an N-acylsphing-4-enine + ATP = an N-acylsphing-4-enine 1-phosphate + ADP + H(+). It carries out the reaction N-(hexanoyl)sphing-4-enine + ATP = N-hexanoylsphing-4-enine 1-phosphate + ADP + H(+). It catalyses the reaction N-(acetyl)-sphing-4-enine + ATP = N-(acetyl)-sphing-4-enine-1-phosphate + ADP + H(+). The catalysed reaction is N-hexadecanoylsphing-4-enine + ATP = N-(hexadecanoyl)-sphing-4-enine-1-phosphate + ADP + H(+). The enzyme catalyses N-hexanoyl-(4R)-hydroxysphinganine + ATP = N-hexanoyl-(4R)-hydroxysphinganine-1-phosphate + ADP + H(+). Inhibited by sulfatide. Inhibited by sphinganine, sphingenine, and N,N-Dimethylsphingosine (DMS). Cardiolipin at 0.1 uM significantly increases activity, whereas at concentrations &gt;1 uM has an inhibitory effect. Catalyzes specifically the phosphorylation of ceramide to form ceramide 1-phosphate. Acts efficiently on natural and analog ceramides (C6, C8, C16 ceramides, and C8-dihydroceramide), to a lesser extent on C2-ceramide and C6-dihydroceramide, but not on other lipids, such as various sphingosines. Shows a greater preference for D-erythro isomer of ceramides. Binds phosphoinositides. The protein is Ceramide kinase (CERK) of Homo sapiens (Human).